Consider the following 176-residue polypeptide: SsrA-binding protein (176 aa).

The tract at residues 1 to 33 (MTEAGAKKAAGKKSGKGKGKNAKKNQPNITPVA) is disordered. Basic residues predominate over residues 9–23 (AAGKKSGKGKGKNAK).

Belongs to the SmpB family.

It localises to the cytoplasm. Functionally, required for rescue of stalled ribosomes mediated by trans-translation. Binds to transfer-messenger RNA (tmRNA), required for stable association of tmRNA with ribosomes. tmRNA and SmpB together mimic tRNA shape, replacing the anticodon stem-loop with SmpB. tmRNA is encoded by the ssrA gene; the 2 termini fold to resemble tRNA(Ala) and it encodes a 'tag peptide', a short internal open reading frame. During trans-translation Ala-aminoacylated tmRNA acts like a tRNA, entering the A-site of stalled ribosomes, displacing the stalled mRNA. The ribosome then switches to translate the ORF on the tmRNA; the nascent peptide is terminated with the 'tag peptide' encoded by the tmRNA and targeted for degradation. The ribosome is freed to recommence translation, which seems to be the essential function of trans-translation. The sequence is that of SsrA-binding protein from Rhodopirellula baltica (strain DSM 10527 / NCIMB 13988 / SH1).